Reading from the N-terminus, the 474-residue chain is Bifunctional protein HldE (474 aa).

Residues 1-318 form a ribokinase region; sequence MKLSMPRFDQ…RAIQREEGSE (318 aa). Residue 194 to 197 coordinates ATP; sequence NLSE. Aspartate 263 is an active-site residue. The interval 343–474 is cytidylyltransferase; it reads FTNGCFDILH…AIVEKIRGQG (132 aa).

It in the N-terminal section; belongs to the carbohydrate kinase PfkB family. The protein in the C-terminal section; belongs to the cytidylyltransferase family. As to quaternary structure, homodimer.

The enzyme catalyses D-glycero-beta-D-manno-heptose 7-phosphate + ATP = D-glycero-beta-D-manno-heptose 1,7-bisphosphate + ADP + H(+). It catalyses the reaction D-glycero-beta-D-manno-heptose 1-phosphate + ATP + H(+) = ADP-D-glycero-beta-D-manno-heptose + diphosphate. Its pathway is nucleotide-sugar biosynthesis; ADP-L-glycero-beta-D-manno-heptose biosynthesis; ADP-L-glycero-beta-D-manno-heptose from D-glycero-beta-D-manno-heptose 7-phosphate: step 1/4. It participates in nucleotide-sugar biosynthesis; ADP-L-glycero-beta-D-manno-heptose biosynthesis; ADP-L-glycero-beta-D-manno-heptose from D-glycero-beta-D-manno-heptose 7-phosphate: step 3/4. In terms of biological role, catalyzes the phosphorylation of D-glycero-D-manno-heptose 7-phosphate at the C-1 position to selectively form D-glycero-beta-D-manno-heptose-1,7-bisphosphate. Catalyzes the ADP transfer from ATP to D-glycero-beta-D-manno-heptose 1-phosphate, yielding ADP-D-glycero-beta-D-manno-heptose. The sequence is that of Bifunctional protein HldE from Pseudomonas syringae pv. syringae (strain B728a).